The following is a 130-amino-acid chain: Large ribosomal subunit protein bL19 (130 aa).

The protein belongs to the bacterial ribosomal protein bL19 family.

Its function is as follows. This protein is located at the 30S-50S ribosomal subunit interface and may play a role in the structure and function of the aminoacyl-tRNA binding site. This chain is Large ribosomal subunit protein bL19, found in Mycoplasma capricolum subsp. capricolum (strain California kid / ATCC 27343 / NCTC 10154).